A 1025-amino-acid polypeptide reads, in one-letter code: Leucyl-cystinyl aminopeptidase (1025 aa).

Methionine 1 bears the N-acetylmethionine mark. Residues 1–110 (MEPFTNDRLQ…GACSVPSART (110 aa)) lie on the Cytoplasmic side of the membrane. Positions 53 to 54 (LL) match the Dileucine internalization motif motif. Phosphotyrosine is present on tyrosine 70. Positions 76-77 (LL) match the Dileucine internalization motif motif. A phosphoserine mark is found at serine 80 and serine 91. The interval 96–101 (RQSPDG) is tankyrase binding. The helical; Signal-anchor for type II membrane protein transmembrane segment at 111–131 (MVVCAFVIVVAVSVIMVIYLL) threads the bilayer. Over 132 to 1025 (PRCTFTKEGC…KNLKSLTWWL (894 aa)) the chain is Extracellular. N-linked (GlcNAc...) asparagine glycans are attached at residues asparagine 145, asparagine 184, asparagine 215, asparagine 256, and asparagine 266. Glutamate 295 lines the substrate pocket. Asparagine 368 and asparagine 374 each carry an N-linked (GlcNAc...) asparagine glycan. 428–432 (GAMEN) lines the substrate pocket. A glycan (N-linked (GlcNAc...) asparagine) is linked at asparagine 448. Histidine 464 is a binding site for Zn(2+). The active-site Proton acceptor is the glutamate 465. Residues histidine 468 and glutamate 487 each contribute to the Zn(2+) site. N-linked (GlcNAc...) asparagine glycans are attached at residues asparagine 525, asparagine 578, asparagine 598, asparagine 664, asparagine 682, asparagine 760, asparagine 834, asparagine 850, and asparagine 989.

It belongs to the peptidase M1 family. As to quaternary structure, homodimer. Binds tankyrases 1 and 2. Zn(2+) is required as a cofactor. The pregnancy serum form is derived from the membrane-bound form by proteolytic processing. In terms of processing, N-glycosylated. As to expression, highly expressed in placenta, heart, kidney and small intestine. Detected at lower levels in neuronal cells in the brain, in skeletal muscle, spleen, liver, testes and colon.

It is found in the cell membrane. Its subcellular location is the secreted. It carries out the reaction Release of an N-terminal amino acid, Cys-|-Xaa-, in which the half-cystine residue is involved in a disulfide loop, notably in oxytocin or vasopressin. Hydrolysis rates on a range of aminoacyl arylamides exceed that for the cystinyl derivative, however.. Functionally, release of an N-terminal amino acid, cleaves before cysteine, leucine as well as other amino acids. Degrades peptide hormones such as oxytocin, vasopressin and angiotensin III, and plays a role in maintaining homeostasis during pregnancy. May be involved in the inactivation of neuronal peptides in the brain. Cleaves Met-enkephalin and dynorphin. Binds angiotensin IV and may be the angiotensin IV receptor in the brain. In Homo sapiens (Human), this protein is Leucyl-cystinyl aminopeptidase (LNPEP).